A 346-amino-acid chain; its full sequence is Phosphoribosylformylglycinamidine cyclo-ligase (346 aa).

This sequence belongs to the AIR synthase family.

It is found in the cytoplasm. It catalyses the reaction 2-formamido-N(1)-(5-O-phospho-beta-D-ribosyl)acetamidine + ATP = 5-amino-1-(5-phospho-beta-D-ribosyl)imidazole + ADP + phosphate + H(+). Its pathway is purine metabolism; IMP biosynthesis via de novo pathway; 5-amino-1-(5-phospho-D-ribosyl)imidazole from N(2)-formyl-N(1)-(5-phospho-D-ribosyl)glycinamide: step 2/2. In Shewanella pealeana (strain ATCC 700345 / ANG-SQ1), this protein is Phosphoribosylformylglycinamidine cyclo-ligase.